We begin with the raw amino-acid sequence, 742 residues long: Synaptic vesicle glycoprotein 2A (742 aa).

The interaction with SYT1 stretch occupies residues 1-57 (MEEGFRDRAAFIRGAKDIAKEVKKHAAKKVVKGLDRVQDEYSRRSYSRFEEEDDDDD). The Cytoplasmic portion of the chain corresponds to 1–169 (MEEGFRDRAA…GHGRFQWTLY (169 aa)). Over residues 33-49 (GLDRVQDEYSRRSYSRF) the composition is skewed to basic and acidic residues. Residues 33 to 144 (GLDRVQDEYS…GRGEAQRRKE (112 aa)) are disordered. A phosphoserine mark is found at serine 80 and serine 81. Threonine 84 is modified (phosphothreonine). Positions 122-137 (VRGGLSDGEGPPGGRG) are enriched in gly residues. Serine 127 is subject to Phosphoserine. A helical transmembrane segment spans residues 170-190 (FVLGLALMADGVEVFVVGFVL). Residues 191-205 (PSAEKDMCLSDSNKG) are Extracellular-facing. Residues 206-226 (MLGLIVYLGMMVGAFLWGGLA) traverse the membrane as a helical segment. The Cytoplasmic segment spans residues 227-233 (DRLGRRQ). The helical transmembrane segment at 234 to 254 (CLLISLSVNSVFAFFSSFVQG) threads the bilayer. The Extracellular portion of the chain corresponds to 255–262 (YGTFLFCR). Residues 263-283 (LLSGVGIGGSIPIVFSYFSEF) form a helical membrane-spanning segment. Over 284–294 (LAQEKRGEHLS) the chain is Cytoplasmic. The chain crosses the membrane as a helical span at residues 295–315 (WLCMFWMIGGVYAAAMAWAII). Residues 316-334 (PHYGWSFQMGSAYQFHSWR) are Extracellular-facing. A helical membrane pass occupies residues 335–355 (VFVLVCAFPSVFAIGALTTQP). The Cytoplasmic segment spans residues 356–447 (ESPRFFLENG…CFGPEYRRIT (92 aa)). Position 393 is a phosphoserine (serine 393). A helical transmembrane segment spans residues 448 to 468 (LMMMGVWFTMSFSYYGLTVWF). Residues 469 to 598 (PDMIRHLQAV…GTGEGAYMVY (130 aa)) are Extracellular-facing. The residue at position 480 (tyrosine 480) is a Phosphotyrosine. Asparagine 498, asparagine 548, and asparagine 573 each carry an N-linked (GlcNAc...) asparagine glycan. The helical transmembrane segment at 599 to 619 (FVSFLGTLAVLPGNIVSALLM) threads the bilayer. Residues 620–626 (DKIGRLR) lie on the Cytoplasmic side of the membrane. Residues 627-647 (MLAGSSVMSCVSCFFLSFGNS) traverse the membrane as a helical segment. At 648-651 (ESAM) the chain is on the extracellular side. A helical membrane pass occupies residues 652 to 672 (IALLCLFGGVSIASWNALDVL). Topologically, residues 673–690 (TVGLYPSDKRTTAFGFLN) are cytoplasmic. A helical membrane pass occupies residues 691-711 (ALCKLAAVLGISIFTSFVGIT). Lysine 712 is a topological domain (extracellular). A helical transmembrane segment spans residues 713–733 (AAPIPFASAALALGSSLALKL). Residues 734 to 742 (PETRGQVLQ) are Cytoplasmic-facing.

This sequence belongs to the major facilitator superfamily. As to quaternary structure, interacts with SYT1/synaptotagmin-1 in a calcium-dependent manner. Binds the adapter protein complex AP-2. Post-translationally, phosphorylation by CK1 of the N-terminal cytoplasmic domain regulates interaction with SYT1. N-glycosylated.

Its subcellular location is the presynapse. It localises to the cytoplasmic vesicle. It is found in the secretory vesicle. The protein resides in the synaptic vesicle membrane. Its function is as follows. Plays a role in the control of regulated secretion in neural and endocrine cells, enhancing selectively low-frequency neurotransmission. Positively regulates vesicle fusion by maintaining the readily releasable pool of secretory vesicles. This chain is Synaptic vesicle glycoprotein 2A (SV2A), found in Macaca fascicularis (Crab-eating macaque).